The following is a 383-amino-acid chain: 8-amino-7-oxononanoate synthase (383 aa).

Positions 27 and 34 each coordinate substrate. Residue 114-115 (GY) participates in pyridoxal 5'-phosphate binding. Histidine 139 contributes to the substrate binding site. Residues serine 187, 212-215 (DDAH), and 232-235 (TLSK) contribute to the pyridoxal 5'-phosphate site. The residue at position 235 (lysine 235) is an N6-(pyridoxal phosphate)lysine. Substrate is bound at residue threonine 344.

This sequence belongs to the class-II pyridoxal-phosphate-dependent aminotransferase family. BioF subfamily. Homodimer. Pyridoxal 5'-phosphate serves as cofactor.

It carries out the reaction 6-carboxyhexanoyl-[ACP] + L-alanine + H(+) = (8S)-8-amino-7-oxononanoate + holo-[ACP] + CO2. It participates in cofactor biosynthesis; biotin biosynthesis. Functionally, catalyzes the decarboxylative condensation of pimeloyl-[acyl-carrier protein] and L-alanine to produce 8-amino-7-oxononanoate (AON), [acyl-carrier protein], and carbon dioxide. The polypeptide is 8-amino-7-oxononanoate synthase (Methylorubrum extorquens (strain CM4 / NCIMB 13688) (Methylobacterium extorquens)).